The primary structure comprises 22 residues: Mu-conotoxin KIIIB (22 aa).

Residues 1 to 2 constitute a propeptide that is removed on maturation; the sequence is KR. Disulfide bonds link cysteine 5–cysteine 13, cysteine 5–cysteine 19, cysteine 5–cysteine 20, cysteine 6–cysteine 13, cysteine 6–cysteine 19, cysteine 8–cysteine 19, and cysteine 8–cysteine 20. Pharmacophore key residues stretches follow at residues 14 to 16 and 18 to 19; these read RDH and RC. A Cysteine amide modification is found at cysteine 20.

It belongs to the conotoxin M superfamily. In terms of assembly, monomer. In terms of processing, toxins with three different disulfide connectivities have been synthesized. The conotoxin mu-KIIIA-P1 shows the connectivity C1-C5, C2-C4, and C3-C6, whereas mu-KIIIA-P2 shows the connectivity C1-C6, C2-C4, and C3-C5. The conotoxin mu-KIIIA-N has the 'native' fold of the mu-conotoxin family (C1-C4, C2-C5, and C3-C6). Mu-KIIIA-P1 and mu-KIIIA-P2 are obtained by both thermodynamic oxidative folding and regioselective synthesis. Mu-KIIIA-P1 is the major oxidative folding product. Mu-KIIIA-N is only obtained by regioselective synthesis. In terms of tissue distribution, expressed by the venom duct.

It localises to the secreted. Mu-conotoxin KIIIA-P1: mu-conotoxins block voltage-gated sodium channels (Nav). This toxin potently blocks Nav1.2/SCN2A (IC(50)5-124 nM), Nav1.4/SCN4A (IC(50)=20-90 nM), and Nav1.7/SCN9A (IC(50)=290-413 nM). It moderately blocks Nav1.1/SCN1A, and mNav1.6/SCN8A. It also shows a very low activity on Nav1.3/SCN3A. This toxin binds a microsite within the pore different from the tetrodotoxin binding site 1 (tested on Nav1.2). The block is partial, with a residual current that can be completely blocked by TTX. The toxin probably docks at a more superficial site in the outer vestibule of the channel than does TTX. On rNav1.2/SCN2A, it produces a block that is only partially reversible. The block of Nav1.7 is modified when beta-subunits are coexpressed with the alpha subunit. Hence, blocks of channels containing beta-1 and beta-3 subunits are more potent (compared to channels without beta subunits), whereas blocks of channels containing beta-2 and beta-4 subunits are less potent (compared to channels without beta subunits). In terms of biological role, mu-conotoxin KIIIA-P2: This toxin potently blocks Nav1.2/SCN2A (Kd=230 nM, IC(50)=1.37 uM) and Nav1.4/SCN4A (Kd=830 nM, IC(50)=2 uM). It also moderately blocks Nav1.7/SCN9A (Kd=1.57 uM, IC(50)=5.4 uM). In addition, this toxin may also inhibit other sodium channels, as does Mu-conotoxin KIIIA-P1. Functionally, mu-conotoxin KIIIA-N: This toxin moderately blocks Nav1.2/SCN2A (IC(50)=875 nM), Nav1.4/SCN4A (IC(50)=472 nM), and Nav1.7/SCN9A (IC(50)=887 nM). Its function is as follows. Mu-conotoxin KIIIB-P1: This toxin potently blocks Nav1.2/SCN2A (Kd=470 nM). In addition, this toxin may also inhibit other sodium channels, as does Mu-conotoxin KIIIA-P1. Mu-conotoxin KIIIB-P2: This toxin potently blocks Nav1.2/SCN2A (Kd=26 nM). In addition, this toxin may also inhibit other sodium channels, as does Mu-conotoxin KIIIA-P1. In Conus kinoshitai (Kinoshita's cone), this protein is Mu-conotoxin KIIIB.